A 160-amino-acid polypeptide reads, in one-letter code: MAKETVEILIDGGKATPGPPLGPAIGPLGINMMQVVEEINRKTADFEGMKVPVKIIVDTDTRDFEVEVGTPPTTALIMDELKLEKGSQDPGMDKIADISMEQVLKIARMKFDALLSNDYKRAVKEIMGTCVSMGITVNGKDPREVQREVDQGVYDDLLTS.

This sequence belongs to the universal ribosomal protein uL11 family. As to quaternary structure, part of the ribosomal stalk of the 50S ribosomal subunit. Interacts with L10 and the large rRNA to form the base of the stalk. L10 forms an elongated spine to which L12 dimers bind in a sequential fashion forming a multimeric L10(L12)X complex.

Forms part of the ribosomal stalk which helps the ribosome interact with GTP-bound translation factors. The sequence is that of Large ribosomal subunit protein uL11 from Methanothermobacter thermautotrophicus (strain ATCC 29096 / DSM 1053 / JCM 10044 / NBRC 100330 / Delta H) (Methanobacterium thermoautotrophicum).